A 554-amino-acid chain; its full sequence is Asparagine--tRNA ligase, cytoplasmic (554 aa).

The protein belongs to the class-II aminoacyl-tRNA synthetase family.

It is found in the cytoplasm. Its subcellular location is the cytosol. It carries out the reaction tRNA(Asn) + L-asparagine + ATP = L-asparaginyl-tRNA(Asn) + AMP + diphosphate + H(+). Catalyzes the attachment of asparagine to tRNA(Asn) in a two-step reaction: asparagine is first activated by ATP to form Asn-AMP and then transferred to the acceptor end of tRNA(Asn). This chain is Asparagine--tRNA ligase, cytoplasmic, found in Saccharomyces cerevisiae (strain ATCC 204508 / S288c) (Baker's yeast).